A 153-amino-acid chain; its full sequence is Small ribosomal subunit protein uS9 (153 aa).

Residues 1-19 show a composition bias toward low complexity; that stretch reads MTAPADEAPAVEDAPVAED. Disordered stretches follow at residues 1–23 and 121–153; these read MTAP…IAPV and LKKA…YSKR. Over residues 129–138 the composition is skewed to basic and acidic residues; that stretch reads RDSREKERKK. Residues 139 to 153 are compositionally biased toward basic residues; that stretch reads YGLKKARKAPQYSKR.

Belongs to the universal ribosomal protein uS9 family.

The polypeptide is Small ribosomal subunit protein uS9 (Saccharopolyspora erythraea (strain ATCC 11635 / DSM 40517 / JCM 4748 / NBRC 13426 / NCIMB 8594 / NRRL 2338)).